The chain runs to 423 residues: Serine--tRNA ligase (423 aa).

229–231 (TAE) is an L-serine binding site. Residue 260-262 (RRE) participates in ATP binding. Residue E283 participates in L-serine binding. Residue 347–350 (EISS) coordinates ATP. S383 contacts L-serine.

Belongs to the class-II aminoacyl-tRNA synthetase family. Type-1 seryl-tRNA synthetase subfamily. As to quaternary structure, homodimer. The tRNA molecule binds across the dimer.

The protein localises to the cytoplasm. It catalyses the reaction tRNA(Ser) + L-serine + ATP = L-seryl-tRNA(Ser) + AMP + diphosphate + H(+). It carries out the reaction tRNA(Sec) + L-serine + ATP = L-seryl-tRNA(Sec) + AMP + diphosphate + H(+). Its pathway is aminoacyl-tRNA biosynthesis; selenocysteinyl-tRNA(Sec) biosynthesis; L-seryl-tRNA(Sec) from L-serine and tRNA(Sec): step 1/1. In terms of biological role, catalyzes the attachment of serine to tRNA(Ser). Is also able to aminoacylate tRNA(Sec) with serine, to form the misacylated tRNA L-seryl-tRNA(Sec), which will be further converted into selenocysteinyl-tRNA(Sec). The protein is Serine--tRNA ligase of Trichlorobacter lovleyi (strain ATCC BAA-1151 / DSM 17278 / SZ) (Geobacter lovleyi).